The following is a 695-amino-acid chain: Polyribonucleotide nucleotidyltransferase (695 aa).

Asp488 and Asp494 together coordinate Mg(2+). One can recognise a KH domain in the interval 554-613 (PKTAVIKIQTDKIRDLIGKGGETIKGIISTSSASVDVDDNGNVNIFSNDQKSFDTAMQMV). Residues 623-690 (GKVYTGKVVK…DRGRIKLSRK (68 aa)) form the S1 motif domain.

It belongs to the polyribonucleotide nucleotidyltransferase family. In terms of assembly, component of the RNA degradosome, which is a multiprotein complex involved in RNA processing and mRNA degradation. It depends on Mg(2+) as a cofactor.

Its subcellular location is the cytoplasm. The enzyme catalyses RNA(n+1) + phosphate = RNA(n) + a ribonucleoside 5'-diphosphate. In terms of biological role, involved in mRNA degradation. Catalyzes the phosphorolysis of single-stranded polyribonucleotides processively in the 3'- to 5'-direction. This chain is Polyribonucleotide nucleotidyltransferase, found in Ruthia magnifica subsp. Calyptogena magnifica.